Reading from the N-terminus, the 248-residue chain is MTEVLGRVHSVETMGTVDGPGIRFIVFMQGCLLRCQFCHNPDTWKIGTGTERSAQDVFDEAIKYKEFWDASGGGVTVSGGEPLLQVDFLIEFFTLCKAAGVHTTIDSCGGCFTRDPEFIEKLDRLMEVTDLILLDIKQINPEKHLKLTTKSNAPIIDFAHYLRDKEQPIWIRHVLIPTKTDDPEDLTKLHEFIQTLPNVKQVDVLPYHTMGVYKWKEMGIRYPLEGIEAPEEEVVALANKILETSSYK.

The Radical SAM core domain occupies 17–248; that stretch reads VDGPGIRFIV…NKILETSSYK (232 aa). The [4Fe-4S] cluster site is built by Cys31, Cys35, and Cys38. Residues 37 to 39, Gly80, 135 to 137, and His208 each bind S-adenosyl-L-methionine; these read FCH and DIK.

This sequence belongs to the organic radical-activating enzymes family. [4Fe-4S] cluster is required as a cofactor.

It is found in the cytoplasm. The enzyme catalyses glycyl-[formate C-acetyltransferase] + reduced [flavodoxin] + S-adenosyl-L-methionine = glycin-2-yl radical-[formate C-acetyltransferase] + semiquinone [flavodoxin] + 5'-deoxyadenosine + L-methionine + H(+). Activation of pyruvate formate-lyase under anaerobic conditions by generation of an organic free radical, using S-adenosylmethionine and reduced flavodoxin as cosubstrates to produce 5'-deoxy-adenosine. This Listeria innocua serovar 6a (strain ATCC BAA-680 / CLIP 11262) protein is Pyruvate formate-lyase-activating enzyme (pflA).